Reading from the N-terminus, the 117-residue chain is Small ribosomal subunit protein bS6 (117 aa).

The segment at 96–117 is disordered; the sequence is HAEGPSVQMQKRDERDNRRERR. Residues 105–117 are compositionally biased toward basic and acidic residues; it reads QKRDERDNRRERR.

This sequence belongs to the bacterial ribosomal protein bS6 family.

In terms of biological role, binds together with bS18 to 16S ribosomal RNA. In Ruegeria sp. (strain TM1040) (Silicibacter sp.), this protein is Small ribosomal subunit protein bS6.